The primary structure comprises 550 residues: Methyl-coenzyme M reductase I subunit alpha (550 aa).

A coenzyme F430-binding site is contributed by Gln147. Residues Arg225, 256 to 257 (KH), and Arg270 each bind coenzyme B. The residue at position 257 (His257) is a Pros-methylhistidine. Arg271 is subject to 5-methylarginine. Tyr333 contributes to the coenzyme M binding site. Gln400 bears the 2-methylglutamine mark. Tyr444 is a binding site for coenzyme M. Residue Gly445 is modified to 1-thioglycine. Position 450 is a (Z)-2,3-didehydroaspartate (Asp450). Cys452 bears the S-methylcysteine mark.

It belongs to the methyl-coenzyme M reductase alpha subunit family. As to quaternary structure, MCR is a hexamer of two alpha, two beta, and two gamma chains, forming a dimer of heterotrimers. Requires coenzyme F430 as cofactor. In terms of processing, the alpha subunit contains six modified amino acids near the active site region. Is methylated on His-257, Arg-271, Gln-400 and Cys-452, probably by the action of specific S-adenosylmethionine-dependent methyltransferases. Also contains a thioglycine at position 445, forming a thiopeptide bond. Contains a didehydroaspartate residue at position 450. The methylation on C5 of Arg-271 is a post-translational methylation not essential in vivo, but which plays a role for the stability and structural integrity of MCR.

The protein localises to the cytoplasm. It catalyses the reaction coenzyme B + methyl-coenzyme M = methane + coenzyme M-coenzyme B heterodisulfide. It participates in one-carbon metabolism; methyl-coenzyme M reduction; methane from methyl-coenzyme M: step 1/1. Methyl-coenzyme M reductase activity is inhibited by 3-nitrooxypropanol (3-NOP) in vitro and in vivo, by oxidation of its active site Ni(I), which stops both growth and methanogenesis. Is also inhibited by the reaction product CoM-S-S-CoB. Its function is as follows. Component of the methyl-coenzyme M reductase (MCR) I that catalyzes the reductive cleavage of methyl-coenzyme M (CoM-S-CH3 or 2-(methylthio)ethanesulfonate) using coenzyme B (CoB or 7-mercaptoheptanoylthreonine phosphate) as reductant which results in the production of methane and the mixed heterodisulfide of CoB and CoM (CoM-S-S-CoB). This is the final step in methanogenesis. Neither N-6-mercaptohexanoylthreonine phosphate (H-S-HxoTP) nor N-8-mercaptooctanoylthreonine phosphate (H-SOcoTP) nor any other thiol compound such as CoA or CoM can substitute for CoB as the electron donor. The protein is Methyl-coenzyme M reductase I subunit alpha (mcrA) of Methanothermobacter marburgensis (strain ATCC BAA-927 / DSM 2133 / JCM 14651 / NBRC 100331 / OCM 82 / Marburg) (Methanobacterium thermoautotrophicum).